The following is a 635-amino-acid chain: MIKITLKDGSVREYNEGITIKEVAESISAGLARVALAGEVNGEVKDLSYPLENDCTLNLLTFDDEGGRDAYRHTTSHILAQAVKRLYPDAKLAIGPAIENGFYYDFDVEKPFSVEDLEKIEEEMKKIIKEDYKLERFTLPREEAIKFMEERNEPYKVELIRDLPEGETISFYKQGDFVDLCAGPHIESTGKVKAFKLMSVAGAYWRGNEKNKMLQRIYGTSFTKKSDLDAYITRIEEAKKRDHRKLGRELDLFDIYEEGPGFPFFMPKGMVLRNVLEEYWREEHRKAGYQEIKTPIILNEELWHRSGHWDHYKENMYFTKIDEADFAIKPMNCPGGMLVYKRKLHSYRDLPQRLAELGLVHRHELSGVLHGLMRVRCFTQDDAHIFMTPDQIESEILGVISLIDDFYKVFGFKYHVELSTRPENSMGSDEDWERATNALKNALEKKGIDYKINEGDGAFYGPKIDFHLEDSIGRTWQCGTIQLDFQMPERFDLTYIGPDGEKHRPVMIHRVVFGSIERFIAILTEHYAGAFPVWLSPVQVKILPILEKQHDYVAEVKKALEEKGVRVEADLRNEKIGYKIREAQLEKVPYMLVIGDKEMENRTVAVRSRKDGDLGPMRLEDFVNRIVEAIKNKEN.

In terms of domain architecture, TGS spans 1–61; that stretch reads MIKITLKDGS…ENDCTLNLLT (61 aa). A catalytic region spans residues 242–532; the sequence is DHRKLGRELD…LTEHYAGAFP (291 aa). Cys333, His384, and His509 together coordinate Zn(2+).

Belongs to the class-II aminoacyl-tRNA synthetase family. In terms of assembly, homodimer. The cofactor is Zn(2+).

The protein localises to the cytoplasm. It carries out the reaction tRNA(Thr) + L-threonine + ATP = L-threonyl-tRNA(Thr) + AMP + diphosphate + H(+). In terms of biological role, catalyzes the attachment of threonine to tRNA(Thr) in a two-step reaction: L-threonine is first activated by ATP to form Thr-AMP and then transferred to the acceptor end of tRNA(Thr). Also edits incorrectly charged L-seryl-tRNA(Thr). The chain is Threonine--tRNA ligase from Acetivibrio thermocellus (strain ATCC 27405 / DSM 1237 / JCM 9322 / NBRC 103400 / NCIMB 10682 / NRRL B-4536 / VPI 7372) (Clostridium thermocellum).